Here is a 311-residue protein sequence, read N- to C-terminus: Forkhead box protein I2 (311 aa).

Residues 99-193 (RPPYSYSALI…DNGNFRRKRR (95 aa)) constitute a DNA-binding region (fork-head). 2 disordered regions span residues 188–237 (FRRK…TTTC) and 263–294 (FSLRRPPPTAAAHSPQIPNTAPGFAPGHQTGA). Over residues 219-231 (STPQDPQTSPSPS) the composition is skewed to low complexity.

The protein localises to the nucleus. Functionally, possible transcriptional activator. In Mus musculus (Mouse), this protein is Forkhead box protein I2.